We begin with the raw amino-acid sequence, 196 residues long: Pyridoxal 5'-phosphate synthase subunit PdxT (196 aa).

47-49 lines the L-glutamine pocket; sequence GES. C79 serves as the catalytic Nucleophile. Residues R106 and 134-135 contribute to the L-glutamine site; that span reads IR. Active-site charge relay system residues include H170 and E172.

This sequence belongs to the glutaminase PdxT/SNO family. In the presence of PdxS, forms a dodecamer of heterodimers. Only shows activity in the heterodimer.

It catalyses the reaction aldehydo-D-ribose 5-phosphate + D-glyceraldehyde 3-phosphate + L-glutamine = pyridoxal 5'-phosphate + L-glutamate + phosphate + 3 H2O + H(+). It carries out the reaction L-glutamine + H2O = L-glutamate + NH4(+). The protein operates within cofactor biosynthesis; pyridoxal 5'-phosphate biosynthesis. Its function is as follows. Catalyzes the hydrolysis of glutamine to glutamate and ammonia as part of the biosynthesis of pyridoxal 5'-phosphate. The resulting ammonia molecule is channeled to the active site of PdxS. The protein is Pyridoxal 5'-phosphate synthase subunit PdxT of Bacillus mycoides (strain KBAB4) (Bacillus weihenstephanensis).